We begin with the raw amino-acid sequence, 304 residues long: Rhomboid-like protein 19 (304 aa).

6 consecutive transmembrane segments (helical) span residues 23-43, 58-78, 93-113, 120-140, 158-175, and 179-198; these read LVVGHLVVQFIPATVPYLALI, GYFELSVYGVVFSTVSLLFMG, FIFVVNFLTYLCVFVTAIALY, VYLYMPFAGFHGVLAGLLVGI, WLPSIMLILSIASSFFTL, and AYLPTLIFGTYMGWLYLRYL. Residues 247-304 form a disordered region; sequence SEDHDYSTSGAPLPGSDSAEASRRRERGARALEERLGTERLVPARNKDELQSDGLDNV. The segment covering 266–284 has biased composition (basic and acidic residues); sequence EASRRRERGARALEERLGT.

The protein belongs to the peptidase S54 family.

It is found in the membrane. Functionally, probable rhomboid-type serine protease that catalyzes intramembrane proteolysis. In Arabidopsis thaliana (Mouse-ear cress), this protein is Rhomboid-like protein 19.